Here is a 159-residue protein sequence, read N- to C-terminus: Thymic stromal lymphopoietin (159 aa).

An N-terminal signal peptide occupies residues 1–28; that stretch reads MFPFALLYVLSVSFRKIFILQLVGLVLT. 3 disulfides stabilise this stretch: Cys-34–Cys-110, Cys-69–Cys-75, and Cys-90–Cys-137. Asn-64 is a glycosylation site (N-linked (GlcNAc...) asparagine). Asn-119 carries an N-linked (GlcNAc...) asparagine glycan.

Interacts with a receptor composed of CRLF2 and IL7R. Binding of TSLP to CRLF2/TSLPR is a mechanistic prerequisite for recruitment of IL7R to the high-affinity ternary complex. In terms of tissue distribution, isoform 1 is expressed in a number of tissues including heart, liver and prostate. Isoform 2 is the predominant form in keratinocytes of oral mucosa, skin and in salivary glands. It is secreted into saliva.

Its subcellular location is the secreted. In terms of biological role, cytokine that induces the release of T-cell-attracting chemokines from monocytes and, in particular, enhances the maturation of CD11c(+) dendritic cells. Can induce allergic inflammation by directly activating mast cells. May act as an antimicrobial peptide in the oral cavity and on the skin. This Homo sapiens (Human) protein is Thymic stromal lymphopoietin (TSLP).